The chain runs to 217 residues: Imidazole glycerol phosphate synthase subunit HisH (217 aa).

Residues 1-212 (MLAILDYKAG…YEYCRQSRQE (212 aa)) enclose the Glutamine amidotransferase type-1 domain. Residue Cys79 is the Nucleophile of the active site. Active-site residues include His187 and Glu189.

In terms of assembly, heterodimer of HisH and HisF.

The protein resides in the cytoplasm. It carries out the reaction 5-[(5-phospho-1-deoxy-D-ribulos-1-ylimino)methylamino]-1-(5-phospho-beta-D-ribosyl)imidazole-4-carboxamide + L-glutamine = D-erythro-1-(imidazol-4-yl)glycerol 3-phosphate + 5-amino-1-(5-phospho-beta-D-ribosyl)imidazole-4-carboxamide + L-glutamate + H(+). The catalysed reaction is L-glutamine + H2O = L-glutamate + NH4(+). It functions in the pathway amino-acid biosynthesis; L-histidine biosynthesis; L-histidine from 5-phospho-alpha-D-ribose 1-diphosphate: step 5/9. Functionally, IGPS catalyzes the conversion of PRFAR and glutamine to IGP, AICAR and glutamate. The HisH subunit catalyzes the hydrolysis of glutamine to glutamate and ammonia as part of the synthesis of IGP and AICAR. The resulting ammonia molecule is channeled to the active site of HisF. The sequence is that of Imidazole glycerol phosphate synthase subunit HisH from Desulfovibrio desulfuricans (strain ATCC 27774 / DSM 6949 / MB).